The chain runs to 335 residues: Methionine import ATP-binding protein MetN 2 (335 aa).

The region spanning 2-242 (IEFQNVHKTY…PEHPTTKRFV (241 aa)) is the ABC transporter domain. 38-45 (GHSGAGKS) contributes to the ATP binding site.

This sequence belongs to the ABC transporter superfamily. Methionine importer (TC 3.A.1.24) family. As to quaternary structure, the complex is composed of two ATP-binding proteins (MetN), two transmembrane proteins (MetI) and a solute-binding protein (MetQ).

It localises to the cell inner membrane. The catalysed reaction is L-methionine(out) + ATP + H2O = L-methionine(in) + ADP + phosphate + H(+). The enzyme catalyses D-methionine(out) + ATP + H2O = D-methionine(in) + ADP + phosphate + H(+). In terms of biological role, part of the ABC transporter complex MetNIQ involved in methionine import. Responsible for energy coupling to the transport system. The polypeptide is Methionine import ATP-binding protein MetN 2 (Pseudomonas entomophila (strain L48)).